A 194-amino-acid chain; its full sequence is FMN-dependent NADH:quinone oxidoreductase 1 (194 aa).

Residues Ser9 and 85 to 88 (MYNF) contribute to the FMN site.

The protein belongs to the azoreductase type 1 family. In terms of assembly, homodimer. It depends on FMN as a cofactor.

It catalyses the reaction 2 a quinone + NADH + H(+) = 2 a 1,4-benzosemiquinone + NAD(+). The enzyme catalyses N,N-dimethyl-1,4-phenylenediamine + anthranilate + 2 NAD(+) = 2-(4-dimethylaminophenyl)diazenylbenzoate + 2 NADH + 2 H(+). In terms of biological role, quinone reductase that provides resistance to thiol-specific stress caused by electrophilic quinones. Also exhibits azoreductase activity. Catalyzes the reductive cleavage of the azo bond in aromatic azo compounds to the corresponding amines. The chain is FMN-dependent NADH:quinone oxidoreductase 1 from Xanthomonas euvesicatoria pv. vesicatoria (strain 85-10) (Xanthomonas campestris pv. vesicatoria).